A 155-amino-acid chain; its full sequence is Probable tellurium resistance transcriptional regulator TerW (155 aa).

Functionally, involved in tellurite resistance. TerW binds specifically to the potential promoter region of the terZABCDE operon and probably regulates expression of the genes. This is Probable tellurium resistance transcriptional regulator TerW from Escherichia coli.